The sequence spans 163 residues: ADP-ribosylation factor-like protein 2-binding protein (163 aa).

The protein belongs to the ARL2BP family. In terms of assembly, found in a complex with ARL2BP, ARL2 and SLC25A6. Found in a complex with ARL2, ARL2BP and SLC25A4. Interacts with STAT2, STAT3 and STAT4. Interacts with GTP-bound ARL2 and ARL3; the complex ARL2-ARL2BP as well as ARL2BP alone, binds to SLC25A4. Interaction with ARL2 may be required for targeting to cilia basal body. Interacts with STAT3; interaction is enhanced with ARL2. As to expression, expressed in retina pigment epithelial cells (at protein level). Widely expressed.

It is found in the cytoplasm. It localises to the mitochondrion intermembrane space. The protein resides in the cytoskeleton. The protein localises to the microtubule organizing center. Its subcellular location is the centrosome. It is found in the nucleus. It localises to the spindle. The protein resides in the cilium basal body. Its function is as follows. Together with ARL2, plays a role in the nuclear translocation, retention and transcriptional activity of STAT3. May play a role as an effector of ARL2. The chain is ADP-ribosylation factor-like protein 2-binding protein (ARL2BP) from Homo sapiens (Human).